The sequence spans 377 residues: G-protein coupled receptor 54 (377 aa).

Topologically, residues 1–49 are extracellular; that stretch reads MYSSEELWNSTEQVWINGSGTNFSLGRHEDDEEEEGDKHPFFTDAWLVP. N9, N17, and N22 each carry an N-linked (GlcNAc...) asparagine glycan. Residues 50 to 70 form a helical membrane-spanning segment; sequence LFFSLIMLVGLVGNSLVIYVI. At 71–91 the chain is on the cytoplasmic side; sequence SKHRQMRTATNFYIANLAATD. A helical transmembrane segment spans residues 92–112; it reads IIFLVCCVPFTATLYPLPGWI. At 113-119 the chain is on the extracellular side; that stretch reads FGNFMCK. A disulfide bond links C118 and C198. The chain crosses the membrane as a helical span at residues 120 to 140; sequence FVAFLQQVTVQATCITLTAMS. Topologically, residues 141–160 are cytoplasmic; sequence GDRCYVTVYPLKSLRHRTPK. The chain crosses the membrane as a helical span at residues 161-181; the sequence is VAMIVSICIWIGSFVLSTPIL. Topologically, residues 182–209 are extracellular; it reads MYQRIEEGYWYGPRQYCMERFPSKTHER. The chain crosses the membrane as a helical span at residues 210-230; it reads AFILYQFIAAYLLPVLTISFC. The Cytoplasmic segment spans residues 231–269; that stretch reads YTLMVKRVGQPTVEPVDNNYQVNLLSERTISIRSKVSKM. Residues 270–290 traverse the membrane as a helical segment; that stretch reads VVVIVLLFAICWGPIQIFVLF. The Extracellular portion of the chain corresponds to 291-305; that stretch reads QSFYPNYQPNYATYK. Residues 306–328 traverse the membrane as a helical segment; it reads IKTWANCMSYANSSVNPIVYGFM. Residues 329 to 377 lie on the Cytoplasmic side of the membrane; it reads GASFQKSFRKTFPFLFKHKVRDSSMASRTANAEIKFVAAEEGNNNNAVN.

The protein belongs to the G-protein coupled receptor 1 family. Expressed in a significantly high percentage (45-60%) of mature GnRH1, GnRH2, and GnRH3 neurons and in immature GnRH3 neurons, which had migrated to the vicinity of their final locations in the brain. Only 5% of immature GnRH1 and GnRH2 neurons have receptor transcripts.

Its subcellular location is the cell membrane. In terms of biological role, receptor speculated to be essential for sexual development. May regulate gonadotropin-releasing hormone (GnRH) secretion. The receptor expression could be a 'stop signal' for GnRH1, GnRH2, and GnRH3 neuronal migration, leading to suppression of cell growth and modulation of GnRH secretion, which is important for normal sexual development. The chain is G-protein coupled receptor 54 (gpr54) from Oreochromis niloticus (Nile tilapia).